A 215-amino-acid polypeptide reads, in one-letter code: Small ribosomal subunit protein uS3 (215 aa).

One can recognise a KH type-2 domain in the interval 39–107; the sequence is VRQYLQKRLA…PVHINIEEIR (69 aa).

Belongs to the universal ribosomal protein uS3 family. In terms of assembly, part of the 30S ribosomal subunit. Forms a tight complex with proteins S10 and S14.

Binds the lower part of the 30S subunit head. Binds mRNA in the 70S ribosome, positioning it for translation. This Nitrosomonas eutropha (strain DSM 101675 / C91 / Nm57) protein is Small ribosomal subunit protein uS3.